Consider the following 39-residue polypeptide: Photosystem II reaction center protein X (39 aa).

The helical transmembrane segment at 10 to 30 (WSLLWGTAIVVIPVTVGLIFI) threads the bilayer.

This sequence belongs to the PsbX family. Type 1 subfamily. PSII is composed of 1 copy each of membrane proteins PsbA, PsbB, PsbC, PsbD, PsbE, PsbF, PsbH, PsbI, PsbJ, PsbK, PsbL, PsbM, PsbT, PsbX, PsbY, PsbZ, Psb30/Ycf12, peripheral proteins PsbO, CyanoQ (PsbQ), PsbU, PsbV and a large number of cofactors. It forms dimeric complexes.

Its subcellular location is the cellular thylakoid membrane. In terms of biological role, involved in the binding and/or turnover of quinones at the Q(B) site of photosystem II (PSII). PSII is a light-driven water plastoquinone oxidoreductase, using light energy to abstract electrons from H(2)O, generating a proton gradient subsequently used for ATP formation. This Nostoc punctiforme (strain ATCC 29133 / PCC 73102) protein is Photosystem II reaction center protein X.